The chain runs to 112 residues: Iron-sulfur cluster assembly protein CyaY (112 aa).

This sequence belongs to the frataxin family.

Involved in iron-sulfur (Fe-S) cluster assembly. May act as a regulator of Fe-S biogenesis. The polypeptide is Iron-sulfur cluster assembly protein CyaY (Delftia acidovorans (strain DSM 14801 / SPH-1)).